A 446-amino-acid chain; its full sequence is BAG family molecular chaperone regulator 7 (446 aa).

Residues 230 to 252 (TGGEKKKKHEEKEKKEKIETKSK) form a disordered region. The segment covering 239 to 250 (EEKEKKEKIETK) has biased composition (basic and acidic residues). The IQ domain occupies 303 to 332 (PEYAAVMIQRAFKAYLIRRSKSLRALRDLA). A BAG domain is found at 330–407 (DLAIAKTKLK…AMLDVVDPQP (78 aa)). At threonine 443 the chain carries Phosphothreonine.

As to quaternary structure, binds to the ATPase domain of HSP70/HSC70 chaperones. Interacts with HSP70-11/BIP2.

It localises to the endoplasmic reticulum. In terms of biological role, co-chaperone that regulates diverse cellular pathways, such as programmed cell death and stress responses. Necessary for the proper maintenance of the unfolded protein response (UPR) during heat and cold tolerance. In Arabidopsis thaliana (Mouse-ear cress), this protein is BAG family molecular chaperone regulator 7 (BAG7).